Here is a 72-residue protein sequence, read N- to C-terminus: Translation initiation factor IF-1 (72 aa).

The region spanning 1-72 (MAGNDVIEIE…TKGRITYRHK (72 aa)) is the S1-like domain.

This sequence belongs to the IF-1 family. As to quaternary structure, component of the 30S ribosomal translation pre-initiation complex which assembles on the 30S ribosome in the order IF-2 and IF-3, IF-1 and N-formylmethionyl-tRNA(fMet); mRNA recruitment can occur at any time during PIC assembly.

The protein resides in the cytoplasm. In terms of biological role, one of the essential components for the initiation of protein synthesis. Stabilizes the binding of IF-2 and IF-3 on the 30S subunit to which N-formylmethionyl-tRNA(fMet) subsequently binds. Helps modulate mRNA selection, yielding the 30S pre-initiation complex (PIC). Upon addition of the 50S ribosomal subunit IF-1, IF-2 and IF-3 are released leaving the mature 70S translation initiation complex. The protein is Translation initiation factor IF-1 of Oenococcus oeni (strain ATCC BAA-331 / PSU-1).